A 369-amino-acid polypeptide reads, in one-letter code: 1-aminocyclopropane-1-carboxylate oxidase homolog 2 (369 aa).

The 102-residue stretch at 217–318 (KGLRMLCHYF…VSVACFFHTH (102 aa)) folds into the Fe2OG dioxygenase domain. Fe cation-binding residues include His-241, Asp-243, and His-297.

It belongs to the iron/ascorbate-dependent oxidoreductase family. Fe cation serves as cofactor.

The chain is 1-aminocyclopropane-1-carboxylate oxidase homolog 2 from Arabidopsis thaliana (Mouse-ear cress).